Here is a 211-residue protein sequence, read N- to C-terminus: Superoxide dismutase [Cu-Zn], chloroplastic (211 aa).

A chloroplast-targeting transit peptide spans 1–57; the sequence is MQAILAAAMAAQTLLFSATAPPASLFQSPSSARPFHSLRLAAGPAGAAAARALVVAD. 3 residues coordinate Cu cation: His-103, His-105, and His-120. The cysteines at positions 114 and 203 are disulfide-linked. The Zn(2+) site is built by His-120, His-128, His-137, and Asp-140. His-177 contributes to the Cu cation binding site.

It belongs to the Cu-Zn superoxide dismutase family. As to quaternary structure, homotetramer. The cofactor is Cu cation. Requires Zn(2+) as cofactor.

Its subcellular location is the plastid. The protein resides in the chloroplast. The catalysed reaction is 2 superoxide + 2 H(+) = H2O2 + O2. Functionally, destroys radicals which are normally produced within the cells and which are toxic to biological systems. The chain is Superoxide dismutase [Cu-Zn], chloroplastic (SODCP) from Oryza sativa subsp. japonica (Rice).